Reading from the N-terminus, the 741-residue chain is NAD(P)H-quinone oxidoreductase subunit 5, chloroplastic (741 aa).

The next 16 membrane-spanning stretches (helical) occupy residues 9–29 (WIIP…LLLF), 40–60 (WAFQ…NLSI), 89–109 (IDPL…MVLI), 125–145 (FAYM…SNLI), 147–167 (IYIF…FWFT), 185–205 (GDFG…SFEF), 219–239 (NEVN…GAIA), 258–278 (TPIS…FLVA), 283–303 (LFIV…ITVF), 327–347 (LGYM…FHLI), 354–374 (ALLF…VGYC), 396–416 (NSFL…CFWS), 425–445 (WLYS…TAFY), 549–569 (LFPI…GIPF), 605–625 (VFSV…YKPV), and 718–738 (ISSY…IYYF).

This sequence belongs to the complex I subunit 5 family. In terms of assembly, NDH is composed of at least 16 different subunits, 5 of which are encoded in the nucleus.

The protein resides in the plastid. The protein localises to the chloroplast thylakoid membrane. It carries out the reaction a plastoquinone + NADH + (n+1) H(+)(in) = a plastoquinol + NAD(+) + n H(+)(out). The enzyme catalyses a plastoquinone + NADPH + (n+1) H(+)(in) = a plastoquinol + NADP(+) + n H(+)(out). NDH shuttles electrons from NAD(P)H:plastoquinone, via FMN and iron-sulfur (Fe-S) centers, to quinones in the photosynthetic chain and possibly in a chloroplast respiratory chain. The immediate electron acceptor for the enzyme in this species is believed to be plastoquinone. Couples the redox reaction to proton translocation, and thus conserves the redox energy in a proton gradient. The protein is NAD(P)H-quinone oxidoreductase subunit 5, chloroplastic (ndhF) of Athroisma gracile.